Reading from the N-terminus, the 643-residue chain is RNA-binding protein MEX3D (643 aa).

Disordered regions lie at residues 1-48 and 61-92; these read MPGS…DAAA and GLGGARPGDEGMATRSADGATECGEDEPAPPD. The span at 18-34 shows a compositional bias: low complexity; sequence TAGDPGHPHPALAGAED. Acidic residues predominate over residues 83–92; sequence CGEDEPAPPD. KH domains are found at residues 160-221 and 253-314; these read MTEC…KREI and QTTI…REEI. Disordered stretches follow at residues 357–427, 471–505, and 519–583; these read PHPG…GTAT, GAPAQPNTGTRRSSGGGAATTPRHSPTLPEPGGLS, and VGAV…APGP. Positions 405-418 are enriched in gly residues; the sequence is GGSGNGGFTFGGDG. Thr491 carries the post-translational modification Phosphothreonine. Ser495 is subject to Phosphoserine. 3 stretches are compositionally biased toward low complexity: residues 495–505, 531–556, and 567–583; these read SPTLPEPGGLS, LPPFSGSTTFSTTPSLPSTTLASSTL, and PSTTAANSSASTAAPGP. The RING-type zinc-finger motif lies at 592–632; sequence CVVCSEGEAMAALVPCGHNLFCMDCAVRICGKSEPECPACR.

Its subcellular location is the cytoplasm. It localises to the nucleus. Functionally, RNA binding protein, may be involved in post-transcriptional regulatory mechanisms. In Mus musculus (Mouse), this protein is RNA-binding protein MEX3D (Mex3d).